The sequence spans 684 residues: Threonine--tRNA ligase (684 aa).

In terms of domain architecture, TGS spans M1–A66. Positions D261–P567 are catalytic. Residues C366, H417, and H544 each coordinate Zn(2+).

The protein belongs to the class-II aminoacyl-tRNA synthetase family. In terms of assembly, homodimer. It depends on Zn(2+) as a cofactor.

It localises to the cytoplasm. The enzyme catalyses tRNA(Thr) + L-threonine + ATP = L-threonyl-tRNA(Thr) + AMP + diphosphate + H(+). Functionally, catalyzes the attachment of threonine to tRNA(Thr) in a two-step reaction: L-threonine is first activated by ATP to form Thr-AMP and then transferred to the acceptor end of tRNA(Thr). Also edits incorrectly charged L-seryl-tRNA(Thr). This Mycobacterium avium (strain 104) protein is Threonine--tRNA ligase.